The primary structure comprises 457 residues: ATP synthase subunit beta (457 aa).

An ATP-binding site is contributed by 147–154; sequence GGAGVGKT.

This sequence belongs to the ATPase alpha/beta chains family. As to quaternary structure, F-type ATPases have 2 components, CF(1) - the catalytic core - and CF(0) - the membrane proton channel. CF(1) has five subunits: alpha(3), beta(3), gamma(1), delta(1), epsilon(1). CF(0) has three main subunits: a(1), b(2) and c(9-12). The alpha and beta chains form an alternating ring which encloses part of the gamma chain. CF(1) is attached to CF(0) by a central stalk formed by the gamma and epsilon chains, while a peripheral stalk is formed by the delta and b chains.

The protein resides in the cell inner membrane. It carries out the reaction ATP + H2O + 4 H(+)(in) = ADP + phosphate + 5 H(+)(out). Its function is as follows. Produces ATP from ADP in the presence of a proton gradient across the membrane. The catalytic sites are hosted primarily by the beta subunits. The polypeptide is ATP synthase subunit beta (Haemophilus ducreyi (strain 35000HP / ATCC 700724)).